Consider the following 351-residue polypeptide: MNQDRKWNIVGGRVIKTGIAVFLTVLVCDFFNIPTIFAVITAIVTIEPTATDSIKKGLIRFPASTIGSAYAMTFTFFLGHQAISYALAAMFTIVACQKLRLHAGTLVATLTAVAMIPITANHYFTAFLIRLATTSTGIIVSTLVNFFIFPPHYTKMIFGCTEDLFAKTANIMEEWITALVAGKGVKKETAQDLSKLTLLLHKAIQFVQYEQKDWKYHQHTKKEMRSFLTMQKQLHILQQIIYHIDNLARVSIETCDWSQSEREILQRTIHSIIAILRNRCNEIDEEHFKLIAELDKQFWSYKNDLKDYKPNHYHHHFSSESIILFEVLSIHDMLEELKQISEKYEWENRFN.

Transmembrane regions (helical) follow at residues 19–39, 74–94, 109–129, and 131–151; these read IAVFLTVLVCDFFNIPTIFAV, FTFFLGHQAISYALAAMFTIV, TLTAVAMIPITANHYFTAFLI, and LATTSTGIIVSTLVNFFIFPP.

Belongs to the UPF0421 family.

The protein resides in the cell membrane. This is UPF0421 protein BC_2748 from Bacillus cereus (strain ATCC 14579 / DSM 31 / CCUG 7414 / JCM 2152 / NBRC 15305 / NCIMB 9373 / NCTC 2599 / NRRL B-3711).